We begin with the raw amino-acid sequence, 315 residues long: Aldo-keto reductase family 4 member C11 (315 aa).

Alanine 2 is modified (N-acetylalanine). NADP(+) contacts are provided by residues 23–24 (TW) and aspartate 47. Catalysis depends on tyrosine 52, which acts as the Proton donor. Residues histidine 114, 158 to 159 (SN), glutamine 180, 207 to 213 (SPLGSPG), 256 to 258 (KST), and 262 to 266 (RIREN) contribute to the NADP(+) site. Position 295 is a phosphoserine (serine 295).

Belongs to the aldo/keto reductase family.

Functionally, oxidoreductase that may act on a broad range of substrates such as ketosteroids, aldehydes, ketones and sugars. In Arabidopsis thaliana (Mouse-ear cress), this protein is Aldo-keto reductase family 4 member C11 (AKR4C11).